The sequence spans 143 residues: Peptide methionine sulfoxide reductase MsrB (143 aa).

The 124-residue stretch at 16–139 (DAELRRRLTP…NSAALNFESR (124 aa)) folds into the MsrB domain. Residues cysteine 55, cysteine 58, cysteine 104, and cysteine 107 each coordinate Zn(2+). Cysteine 128 functions as the Nucleophile in the catalytic mechanism.

It belongs to the MsrB Met sulfoxide reductase family. Requires Zn(2+) as cofactor.

The enzyme catalyses L-methionyl-[protein] + [thioredoxin]-disulfide + H2O = L-methionyl-(R)-S-oxide-[protein] + [thioredoxin]-dithiol. The chain is Peptide methionine sulfoxide reductase MsrB from Burkholderia lata (strain ATCC 17760 / DSM 23089 / LMG 22485 / NCIMB 9086 / R18194 / 383).